Consider the following 58-residue polypeptide: MRQLKGKVKETRKQKKERKLDNLETQAKIRTVVLPALGVLAVFLVLFVYLKTRPAVLA.

Positions 1–31 form a coiled coil; the sequence is MRQLKGKVKETRKQKKERKLDNLETQAKIRT. Residues 31-51 traverse the membrane as a helical segment; the sequence is TVVLPALGVLAVFLVLFVYLK.

This sequence belongs to the SMCO4 family.

It localises to the membrane. This chain is Single-pass membrane and coiled-coil domain-containing protein 4 homolog, found in Drosophila melanogaster (Fruit fly).